The following is a 265-amino-acid chain: Tryptophan synthase alpha chain (265 aa).

Catalysis depends on proton acceptor residues E50 and D61.

This sequence belongs to the TrpA family. As to quaternary structure, tetramer of two alpha and two beta chains.

It carries out the reaction (1S,2R)-1-C-(indol-3-yl)glycerol 3-phosphate + L-serine = D-glyceraldehyde 3-phosphate + L-tryptophan + H2O. It functions in the pathway amino-acid biosynthesis; L-tryptophan biosynthesis; L-tryptophan from chorismate: step 5/5. Functionally, the alpha subunit is responsible for the aldol cleavage of indoleglycerol phosphate to indole and glyceraldehyde 3-phosphate. This Trichodesmium erythraeum (strain IMS101) protein is Tryptophan synthase alpha chain.